A 396-amino-acid chain; its full sequence is uncharacterized protein (396 aa).

The protein belongs to the NAD(P)-dependent epimerase/dehydratase family. It depends on NAD(+) as a cofactor. Requires NADP(+) as cofactor.

Putative nucleotide sugar epimerase/dehydrogenase. This is an uncharacterized protein from Sinorhizobium fredii (strain NBRC 101917 / NGR234).